A 132-amino-acid polypeptide reads, in one-letter code: Putative apolipoprotein(a)-like protein 2 (132 aa).

Residues 1-21 (MEHKEVVLLLLLFLKSAPTET) form the signal peptide. Positions 27–105 (ECYHSNGQSY…RWEYCNLTRC (79 aa)) constitute a Kringle domain. 3 disulfides stabilise this stretch: C28/C105, C49/C88, and C77/C100. N-linked (GlcNAc...) asparagine glycosylation is present at N101.

As to expression, expressed in liver but not in other tissues tested.

It is found in the secreted. The protein is Putative apolipoprotein(a)-like protein 2 (LPAL2) of Homo sapiens (Human).